We begin with the raw amino-acid sequence, 79 residues long: Beta-defensin 130 (79 aa).

The N-terminal stretch at 1–22 is a signal peptide; it reads MKLHSLISVLLLFVTLIPKGKT. 2 disulfides stabilise this stretch: Cys38–Cys53 and Cys43–Cys60.

The protein belongs to the beta-defensin family.

The protein localises to the secreted. Its function is as follows. Antimicrobial host-defense peptide. The chain is Beta-defensin 130 from Pan troglodytes (Chimpanzee).